A 175-amino-acid chain; its full sequence is Nucleoside diphosphate kinase 6 (175 aa).

Residues lysine 15, phenylalanine 63, arginine 91, threonine 97, arginine 111, and asparagine 121 each contribute to the ATP site. The Pros-phosphohistidine intermediate role is filled by histidine 124.

It belongs to the NDK family. Mg(2+) is required as a cofactor.

It catalyses the reaction a 2'-deoxyribonucleoside 5'-diphosphate + ATP = a 2'-deoxyribonucleoside 5'-triphosphate + ADP. It carries out the reaction a ribonucleoside 5'-diphosphate + ATP = a ribonucleoside 5'-triphosphate + ADP. Major role in the synthesis of nucleoside triphosphates other than ATP. The ATP gamma phosphate is transferred to the NDP beta phosphate via a ping-pong mechanism, using a phosphorylated active-site intermediate. The chain is Nucleoside diphosphate kinase 6 (nme6) from Danio rerio (Zebrafish).